The chain runs to 325 residues: Tetraacyldisaccharide 4'-kinase (325 aa).

54 to 61 (SVGGTGKT) lines the ATP pocket.

It belongs to the LpxK family.

It carries out the reaction a lipid A disaccharide + ATP = a lipid IVA + ADP + H(+). It functions in the pathway glycolipid biosynthesis; lipid IV(A) biosynthesis; lipid IV(A) from (3R)-3-hydroxytetradecanoyl-[acyl-carrier-protein] and UDP-N-acetyl-alpha-D-glucosamine: step 6/6. Transfers the gamma-phosphate of ATP to the 4'-position of a tetraacyldisaccharide 1-phosphate intermediate (termed DS-1-P) to form tetraacyldisaccharide 1,4'-bis-phosphate (lipid IVA). The chain is Tetraacyldisaccharide 4'-kinase from Rickettsia felis (strain ATCC VR-1525 / URRWXCal2) (Rickettsia azadi).